A 2399-amino-acid chain; its full sequence is MTHSNATRVLVFGDQTYDFVPKLRELFHVKDNPILTAFLEQSHYVVRAQMIQTLPPAEHKAARTFDLADMLKKYVAGKLNPAFQTALSCITQLGVFMREFHDFTKPYPRHDSSYVLGICTGSLAAAAVSSSNSLSELLPIAVQTALIAFRLGLCVTDMRDRLESSEEDRTQPWSVVLFDTDEQTVTKAIKDFCTSNVLPKTKQPWITSASSKTITISGAPRVLKKLSQEPALKDKKTRQIPIYVPAHNSALFTPEDVKSILETTPVDTWSNYPTKLPFISSVSGKMAWADNYLAVIHLALNQCLLESIGWGKVETELPRLLKSRGAENVLITPITTSADRALSAALSPTISNIEVEKPTINESFAHRPGSGKSKLAIVSMSGRFPEAQSTDAFWDLLYKGLDVVKEVPKRRWDVETHVDPTGRARNKGATKWGCWLDFAGEFDPRFFSISPKEAPQMDPAQRMALMSTWEAMERGGIVPDTTPSTQRNRIGVFHGVTSNDWMETNTAQNIDTYFITGGNRGFIPGRINFCFEFSGPSFTNDTACSSSLAAIHLACNSLWRGDCDTAVAGGTNMIFTPDGHAGLDKGFFLSRTGNCKPFDDKADGYCRAEGVGTVMVKRLEDALADGDPILGTILDAKTNHSAMSDSMTRPFVPAQIDNMEACLSTAGVDPTSLDYIEMHGTGTQVGDAVEMESVLSVFAPNEQFRGKDQPLYVGSAKANIGHGEGVSGVTSLIKVLLMMQNNTIPPHCGIKPGSKINHNYPDLAARNVHIAFEPKPFLRREGKLRRVLINNFSAAGGNTALLIEDAPDRMPLSGQDPRTTQTVTISGHVGKSLSNNVANLLAHLKKNPTIDLSQLAYTVSARRWHHLHRVAVAGTTVADITAKLEKAIENKEGVNRPKAKPSVFFAFTGQGSQYLGMGKQLYDSYPMFRSELQGYDRLAQSQGFPSFAHIFTETKGDVEQNLPVVVQLAITCLQMALFNLVTSFGIKASAVVGHSLGEYAALYAAGVLSASDTIYLVGKRAELLQDHCQRGTHAMLACKASEWSLAEITAGKNVEVACVNGPEDTVLSGTVEEIGEVQKTLSAKSIKATLLKLPFAFHSAQVQPILEDFEELAAGATFEKPKLAVISPLLGSVVEDEGVVGPNYLARHCREAVGMVKALGVAKEKGIINEKTIVIEIGPKPLLCGMIKNILGQNIVALPTLKDKGPDVWQNLSNIFTTLYTGGLDINWTAFHAPFEPAKKVLQLPDYGWDLKDYFIQYEGDWVLHRHKIHCNCADAGKDVHNTSHYCPGKHTFAENVVVPGGAQKAVQEAPAAKTETKKMSKLDPTKEAYPGIPLTTTVHKVIEEKTEPLGAQFTVETDISRKDVNSIAQGHTVDSIPLCTPSFYADIALQVGKYAMDRIRAGHPGAGAIDGRVDVTDLVVDKALIPHGKAPQLLRTNVTMSWPPKMAATTRSAKVTFKTYTADGKLDTDHAYCTVRFTTDSQQKSLQKKVPEYKAAIAKLRARDAKGELTHYNTKSGYKLMSSMAHFHPDYKLLDNLVLNEAENEAVSVMNFSSCTDAGIYAAHPAYVDAITQVGGFAMNAKDDTDIDKEVYVNHGWESFQVYKKMEKSVEYVVYSKMTKDPKGDMVHGDTIVLDGDEVVAFFRGLSLRSVPRKALRAVLQSAMDKGIRQRGGKPGAAKGAVAAPAPAKKMVEPVKAASKKETPAAAAPPSPSKAAPPPAPKPAALKASVPKADPGKVDEALKIISEESGIALDELTDDSNFTDMGVDSLSSMVITSRLREDLELDLAPDFALFADCPTVASLRTFLAGAAGGPTDSPAAIATLEFGEPTPAKELEAGPALKSTPISPGVQALQPVPAPTPAPKPVITSPAAPVSSKVFDDALQIISEESGIALDELTDDSNFTDMGVDSLSSMVITSRLREDLELDLSPDWALFADCPTVASLRSFLGGSGPGSTAPADADTPVDTTAAEIEAPVPNEAASYMPNSSQADVDDAVAAVIGNDPPRRPEPPKQAAAPAVARTEALNAALDIIAEESGVAAEDFTDDTIFSDIGIDSLCSMVISSRFREELELDLDSQFSLFVDLPTVAQLREFLTGSSADSDSSSVASNPADPAATPPRSESSDTEPDDEAPSKPKSGPGSTDSCRSTNSVILQGKPKTAAKTLFLLPDGGGSASSYSVIPKLQSDVAVVGINCPYARDPENMTCTWQAMMQSFINEIKRRQPKGPYHLGGWSSGGAFAYVTAEKMIKQGDEVGSLFIFDAPVPQVMEKLPREFYEAVNFTESTAVGTAEPPPYLIPHFMAVVDVMLDYKCKPLQTKKMPNVGLIWADSTVMKEDEAPKMKGMHFMIQKRTNFGPDGWDEVCPGAKFEIVKAVDTNHFTLMTKARVNYVSDLIDKVMG.

Residues 10–247 (LVFGDQTYDF…RQIPIYVPAH (238 aa)) are starter unit:ACP transacylase (SAT) domain. The Ketosynthase family 3 (KS3) domain occupies 372-805 (KSKLAIVSMS…GGNTALLIED (434 aa)). Active-site for beta-ketoacyl synthase activity residues include C544, H679, and H722. The segment at 905 to 1192 (FAFTGQGSQY…LCGMIKNILG (288 aa)) is malonyl-CoA:ACP transacylase (MAT) domain. S995 functions as the For acyl/malonyl transferase activity in the catalytic mechanism. Positions 1307-1327 (VQEAPAAKTETKKMSKLDPTK) are disordered. The segment covering 1315–1327 (TETKKMSKLDPTK) has biased composition (basic and acidic residues). Positions 1340 to 1483 (HKVIEEKTEP…CTVRFTTDSQ (144 aa)) are N-terminal hotdog fold. Residues 1340-1658 (HKVIEEKTEP…LRSVPRKALR (319 aa)) form the PKS/mFAS DH domain. Positions 1353 to 1658 (QFTVETDISR…LRSVPRKALR (306 aa)) are product template (PT) domain. Catalysis depends on H1372, which acts as the Proton acceptor; for dehydratase activity. The interval 1510–1658 (LTHYNTKSGY…LRSVPRKALR (149 aa)) is C-terminal hotdog fold. D1570 (proton donor; for dehydratase activity) is an active-site residue. The tract at residues 1665–1734 (MDKGIRQRGG…AALKASVPKA (70 aa)) is disordered. Residues 1677 to 1698 (GAAKGAVAAPAPAKKMVEPVKA) show a composition bias toward low complexity. Positions 1708–1723 (AAPPSPSKAAPPPAPK) are enriched in pro residues. Residues 1724–1734 (PAALKASVPKA) show a composition bias toward low complexity. Carrier domains are found at residues 1733 to 1812 (KADP…AGAA), 1877 to 1953 (SKVF…GGSG), and 2020 to 2099 (VART…TGSS). Residues S1770, S1911, and S2057 each carry the O-(pantetheine 4'-phosphoryl)serine modification. Residues 2098-2115 (SSADSDSSSVASNPADPA) show a composition bias toward low complexity. A disordered region spans residues 2098 to 2149 (SSADSDSSSVASNPADPAATPPRSESSDTEPDDEAPSKPKSGPGSTDSCRST). Residues 2140 to 2149 (PGSTDSCRST) are compositionally biased toward polar residues. The interval 2164 to 2393 (TLFLLPDGGG…KARVNYVSDL (230 aa)) is thioesterase/Claisen cyclase (TE/CLC) domain. Residue S2234 is the For thioesterase activity of the active site.

It depends on pantetheine 4'-phosphate as a cofactor.

It carries out the reaction hexanoyl-[ACP] + 7 malonyl-CoA + 6 H(+) = noranthrone + holo-[ACP] + 7 CO2 + 7 CoA + 2 H2O. It participates in mycotoxin biosynthesis. Functionally, polyketide synthase; part of the fragmented gene cluster that mediates the biosynthesis of dothistromin (DOTH), a polyketide toxin very similar in structure to the aflatoxin precursor, versicolorin B. The first step of the pathway is the conversion of acetate to norsolorinic acid (NOR) and requires the fatty acid synthase subunits hexA and hexB, as well as the polyketide synthase pksA. PksA combines a hexanoyl starter unit and 7 malonyl-CoA extender units to synthesize the precursor NOR. The hexanoyl starter unit is provided to the acyl-carrier protein (ACP) domain by the fungal fatty acid synthase hexA/hexB. The second step is the conversion of NOR to averantin (AVN) and requires the norsolorinic acid ketoreductase nor1, which catalyzes the dehydration of norsolorinic acid to form (1'S)-averantin. The cytochrome P450 monooxygenase avnA then catalyzes the hydroxylation of AVN to 5'hydroxyaverantin (HAVN). The next step is performed by adhA that transforms HAVN to averufin (AVF). Averufin might then be converted to hydroxyversicolorone by cypX and avfA. Hydroxyversicolorone is further converted versiconal hemiacetal acetate (VHA) by moxY. VHA is then the substrate for the versiconal hemiacetal acetate esterase est1 to yield versiconal (VAL). Versicolorin B synthase vbsA then converts VAL to versicolorin B (VERB) by closing the bisfuran ring. Then, the activity of the versicolorin B desaturase verB leads to versicolorin A (VERA). DotB, a predicted chloroperoxidase, may perform epoxidation of the A-ring of VERA. Alternatively, a cytochrome P450, such as cypX or avnA could catalyze this step. It is also possible that another, uncharacterized, cytochrome P450 enzyme is responsible for this step. Opening of the epoxide could potentially be achieved by the epoxide hydrolase epoA. However, epoA seems not to be required for DOTH biosynthesis, but other epoxide hydrolases may have the ability to complement this hydrolysis. Alternatively, opening of the epoxide ring could be achieved non-enzymatically. The next step is the deoxygenation of ring A to yield the 5,8-dihydroxyanthraquinone which is most likely catalyzed by the NADPH dehydrogenase encoded by ver1. The last stages of DOTH biosynthesis are proposed to involve hydroxylation of the bisfuran. OrdB and norB might have oxidative roles here. An alternative possibility is that cytochrome P450 monoogenases such as avnA and cypX might perform these steps in addition to previously proposed steps. The protein is Norsolorinic acid synthase of Dothistroma septosporum (Red band needle blight fungus).